Here is a 287-residue protein sequence, read N- to C-terminus: Cuticle collagen 38 (287 aa).

An N-terminal signal peptide occupies residues Met1 to Gly19. The tract at residues Gln95–His287 is disordered. Residues Pro98–Leu107 show a composition bias toward pro residues. Collagen-like domains are found at residues Gln145–Gly200 and Gly215–Pro273. Low complexity predominate over residues Thr184–Asp205. A compositionally biased stretch (gly residues) spans Gly206–Gly215. Residues Asp238–Gln252 show a composition bias toward low complexity.

The protein belongs to the cuticular collagen family. Collagen polypeptide chains are complexed within the cuticle by disulfide bonds and other types of covalent cross-links.

Its subcellular location is the nucleus. Its function is as follows. Probable cuticular collagen-like protein. Nematode cuticles are composed largely of collagen-like proteins. The cuticle functions both as an exoskeleton and as a barrier to protect the worm from its environment. Acts downstream of the Wnt signaling pathway, perhaps in the formation of the adult cuticle. The sequence is that of Cuticle collagen 38 from Caenorhabditis elegans.